We begin with the raw amino-acid sequence, 187 residues long: Ribosome-recycling factor (187 aa).

Belongs to the RRF family.

It is found in the cytoplasm. Responsible for the release of ribosomes from messenger RNA at the termination of protein biosynthesis. May increase the efficiency of translation by recycling ribosomes from one round of translation to another. The chain is Ribosome-recycling factor from Methylorubrum populi (strain ATCC BAA-705 / NCIMB 13946 / BJ001) (Methylobacterium populi).